Reading from the N-terminus, the 217-residue chain is UPF0502 protein KPK_3478 (217 aa).

Belongs to the UPF0502 family.

This is UPF0502 protein KPK_3478 from Klebsiella pneumoniae (strain 342).